A 514-amino-acid polypeptide reads, in one-letter code: Ribonuclease Y (514 aa).

The chain crosses the membrane as a helical span at residues 2–22; it reads EDLIVAIVVGAFSSAISIFVV. The region spanning 204 to 268 is the KH domain; that stretch reads LINNIPLNDE…VATKTIRELL (65 aa). Positions 330-423 constitute an HD domain; sequence ALAHTLEVAH…VCAADALSAA (94 aa).

It belongs to the RNase Y family.

It localises to the cell membrane. In terms of biological role, endoribonuclease that initiates mRNA decay. In Aliarcobacter butzleri (strain RM4018) (Arcobacter butzleri), this protein is Ribonuclease Y.